The chain runs to 247 residues: Inhibitory synaptic factor 1 (247 aa).

The stretch at 30 to 65 forms a coiled coil; that stretch reads RAVIGQLEGILRDLKEVAKELKEVVEQIDRLTSDFE. Disordered stretches follow at residues 69–90, 112–166, and 180–217; these read DTDDWTPGTVSSTSSSEKGGPL, ASTP…RDRV, and DDSEDPPYGQETPRDPPRATAPCAVMKSKPGGLTGVRK. The span at 76-85 shows a compositional bias: polar residues; the sequence is GTVSSTSSSE.

The protein belongs to the INSYN1 family.

Its subcellular location is the postsynaptic density. May be a component of the protein machinery at the inhibitory synapses, probably acting as a scaffold. The chain is Inhibitory synaptic factor 1 from Xenopus laevis (African clawed frog).